The chain runs to 306 residues: Acetyl-coenzyme A carboxylase carboxyl transferase subunit beta (306 aa).

Residues 25–294 (LWIKDPTSGE…VFNPSDPSPT (270 aa)) enclose the CoA carboxyltransferase N-terminal domain. Residues 286–306 (FNPSDPSPTDSQTSLSTTKAA) form a disordered region. Low complexity predominate over residues 288 to 306 (PSDPSPTDSQTSLSTTKAA).

It belongs to the AccD/PCCB family. In terms of assembly, acetyl-CoA carboxylase is a heterohexamer composed of biotin carboxyl carrier protein (AccB), biotin carboxylase (AccC) and two subunits each of ACCase subunit alpha (AccA) and ACCase subunit beta (AccD).

It localises to the cytoplasm. It carries out the reaction N(6)-carboxybiotinyl-L-lysyl-[protein] + acetyl-CoA = N(6)-biotinyl-L-lysyl-[protein] + malonyl-CoA. It participates in lipid metabolism; malonyl-CoA biosynthesis; malonyl-CoA from acetyl-CoA: step 1/1. Component of the acetyl coenzyme A carboxylase (ACC) complex. Biotin carboxylase (BC) catalyzes the carboxylation of biotin on its carrier protein (BCCP) and then the CO(2) group is transferred by the transcarboxylase to acetyl-CoA to form malonyl-CoA. The sequence is that of Acetyl-coenzyme A carboxylase carboxyl transferase subunit beta from Bartonella grahamii (strain as4aup).